The primary structure comprises 151 residues: Small ribosomal subunit protein uS15z (151 aa).

This sequence belongs to the universal ribosomal protein uS15 family.

The chain is Small ribosomal subunit protein uS15z (RPS13A) from Arabidopsis thaliana (Mouse-ear cress).